Here is a 132-residue protein sequence, read N- to C-terminus: Large-conductance mechanosensitive channel (132 aa).

3 consecutive transmembrane segments (helical) span residues 14–34 (VVDL…VSSL), 38–58 (IITP…LHFG), and 67–87 (GNFI…FMFI).

The protein belongs to the MscL family. As to quaternary structure, homopentamer.

Its subcellular location is the cell membrane. Channel that opens in response to stretch forces in the membrane lipid bilayer. May participate in the regulation of osmotic pressure changes within the cell. This is Large-conductance mechanosensitive channel from Bacillus cereus (strain G9842).